Here is a 91-residue protein sequence, read N- to C-terminus: Acylphosphatase (91 aa).

The 87-residue stretch at 5–91 (RAHVFVSGRV…EGVDGFEVRW (87 aa)) folds into the Acylphosphatase-like domain. Catalysis depends on residues Arg-20 and Asn-38.

The protein belongs to the acylphosphatase family.

It carries out the reaction an acyl phosphate + H2O = a carboxylate + phosphate + H(+). The protein is Acylphosphatase (acyP) of Haloarcula marismortui (strain ATCC 43049 / DSM 3752 / JCM 8966 / VKM B-1809) (Halobacterium marismortui).